The sequence spans 398 residues: Ras-related GTP-binding protein C (398 aa).

The tract at residues 1-56 (MSLQYGAEETPLAGSYGAADSFPKDFGYGVEEEEEEAAAGGGGGAGAGGGCGPGGA) is disordered. Position 2 is an N-acetylserine (serine 2). Phosphoserine occurs at positions 2 and 15. The segment covering 39–55 (AGGGGGAGAGGGCGPGG) has biased composition (gly residues). GDP contacts are provided by arginine 70, serine 71, glycine 72, lysine 73, serine 74, and serine 75. A GTP-binding site is contributed by lysine 73. Positions 89 and 95 each coordinate GTP. A Phosphothreonine modification is found at threonine 95. Positions 177, 178, 180, and 219 each coordinate GDP. Aspartate 180 contributes to the GTP binding site.

It belongs to the GTR/RAG GTP-binding protein family. In terms of assembly, forms a heterodimer with RRAGA, in a sequence-independent manner, and RRAGB. Heterodimerization stabilizes proteins of the heterodimer. The GDP-bound form of RRAGC (in complex with the GTP-bound form of RRAGA or RRAGB), interacts with RPTOR, thereby promoting recruitment of mTORC1 to the lysosomes. Component of the lysosomal folliculin complex (LFC), composed of FLCN, FNIP1 (or FNIP2), RagA/RRAGA or RagB/RRAGB GDP-bound, RagC/RRAGC or RagD/RRAGD GTP-bound, and Ragulator. Interacts with NOL8. Interacts with SH3BP4; the interaction with this negative regulator is most probably direct, preferentially occurs with the inactive GDP-bound form of RRAGB, is negatively regulated by amino acids and prevents interaction with RPTOR. The Rag heterodimer interacts with SLC38A9; the probable amino acid sensor. Interacts with SESN1, SESN2 and SESN3. Interacts with PIP4P1. The GDP-bound form interacts with TFEB. The GDP-bound form interacts with TFE3. As to expression, expressed most abundantly in kidney. Moderately expressed in brain, ovary, and testis, and detected at lower levels in heart, liver, and muscle. Not detected in lung, spleen, and small intestine. Widely expressed in tumor cells, with expression being specifically up-regulated in highly metastatic cells.

Its subcellular location is the cytoplasm. The protein localises to the nucleus. It localises to the lysosome membrane. It carries out the reaction GTP + H2O = GDP + phosphate + H(+). The activation of RagC/RRAGC is mediated by a GTPase activating protein (GAP). In high-amino acid conditions, activated by GTPase activating protein FLCN that stimulates RRAGC GTPase activity to turn it into its active GDP-bound form. In response to amino acid depletion, the GATOR1 complex inactivates RagC/RRAGC by securing the GTP-bound inactive form. Functionally, guanine nucleotide-binding protein that plays a crucial role in the cellular response to amino acid availability through regulation of the mTORC1 signaling cascade. Forms heterodimeric Rag complexes with RagA/RRAGA or RagB/RRAGB and cycles between an inactive GTP-bound and an active GDP-bound form: RagC/RRAGC is in its active form when GDP-bound RagC/RRAGC forms a complex with GTP-bound RagA/RRAGA (or RagB/RRAGB) and in an inactive form when GTP-bound RagC/RRAGC heterodimerizes with GDP-bound RagA/RRAGA (or RagB/RRAGB). In its GDP-bound active form, promotes the recruitment of mTORC1 to the lysosomes and its subsequent activation by the GTPase RHEB. This is a crucial step in the activation of the MTOR signaling cascade by amino acids. Also plays a central role in the non-canonical mTORC1 complex, which acts independently of RHEB and specifically mediates phosphorylation of MiT/TFE factors TFEB and TFE3: GDP-bound RagC/RRAGC mediates recruitment of MiT/TFE factors TFEB and TFE3. In Mus musculus (Mouse), this protein is Ras-related GTP-binding protein C.